Here is a 311-residue protein sequence, read N- to C-terminus: Arginine/serine-rich protein 1 (311 aa).

The segment at methionine 1 to serine 125 is disordered. A Phosphoserine modification is found at serine 12. Positions serine 20–serine 31 are enriched in low complexity. Basic residues predominate over residues serine 32 to glycine 123. Serine 109 and serine 111 each carry phosphoserine. Arginine 135 is modified (omega-N-methylarginine).

It belongs to the RSRP family. In terms of processing, phosphorylated. Phosphorylation at Ser-109 and Ser-111 mediates the interaction with spliceosome proteins.

It localises to the nucleus. Its function is as follows. Probably acts as a spliceosomal factor that contributes to spliceosome assembly and regulates the isoform switching of proteins such as PARP6. This is Arginine/serine-rich protein 1 (RSRP1) from Pongo abelii (Sumatran orangutan).